A 201-amino-acid polypeptide reads, in one-letter code: Histone-like protein HC2 (201 aa).

The disordered stretch occupies residues 1-69 (MLGVQKKCST…VAKKATAKKA (69 aa)). Basic residues-rich tracts occupy residues 8-50 (CSTR…KTVA) and 59-69 (PVAKKATAKKA).

This sequence belongs to the histone H1/H5 family. HCT subfamily.

Might have a role in establishing the nucleoid structure of elementary bodies. In Chlamydia trachomatis serovar D (strain ATCC VR-885 / DSM 19411 / UW-3/Cx), this protein is Histone-like protein HC2 (hctB).